Reading from the N-terminus, the 395-residue chain is Phosphonoacetaldehyde reductase (395 aa).

3 residues coordinate Fe cation: aspartate 199, histidine 268, and histidine 282.

This sequence belongs to the iron-containing alcohol dehydrogenase family. Fe cation serves as cofactor.

The catalysed reaction is 2-hydroxyethylphosphonate + NAD(+) = phosphonoacetaldehyde + NADH + H(+). It participates in secondary metabolite biosynthesis; bialaphos biosynthesis. Functionally, catalyzes the reduction of phosphonoacetaldehyde to 2-hydroxyethylphosphonate, a step in the biosynthesis of phosphinothricin tripeptide. Phosphinothricin tripeptide (PTT), also known as bialaphos (BA), is a natural-product antibiotic and potent herbicide. Can use both NAD and NADP but the preferred substrate is NAD. This is Phosphonoacetaldehyde reductase (phpC) from Streptomyces viridochromogenes (strain DSM 40736 / JCM 4977 / BCRC 1201 / Tue 494).